Here is a 265-residue protein sequence, read N- to C-terminus: Lysosomal membrane ascorbate-dependent ferrireductase CYB561A3 (265 aa).

Topologically, residues 1-2 are cytoplasmic; sequence MA. A helical membrane pass occupies residues 3 to 23; the sequence is VGWFYLSVLALCSLGSMCILF. One can recognise a Cytochrome b561 domain in the interval 12 to 219; that stretch reads ALCSLGSMCI…FGLLVLYILL (208 aa). Over 24 to 45 the chain is Lumenal; sequence TIYWMRYWHGGFAWDGSMLMFN. Residues 46–66 traverse the membrane as a helical segment; sequence WHPVLMVTGMVVLYSAASLVY. Residues H47 and R67 each coordinate heme b. Residues 67-83 are Cytoplasmic-facing; the sequence is RLPQSWVGPRLPWKSGH. R76 and K80 together coordinate L-ascorbate. H83 lines the heme b pocket. The chain crosses the membrane as a helical span at residues 84-104; sequence AAMHLLAFLLTVLGLHAVFEF. The Lumenal segment spans residues 105 to 119; the sequence is HNHAKIPHLYSLHSW. Heme b contacts are provided by residues 112 to 115 and H117; that span reads HLYS. A helical transmembrane segment spans residues 120-140; that stretch reads LGITTVFLFACQWFLGFSVFL. The Cytoplasmic portion of the chain corresponds to 141-154; the sequence is LPWASMWLRSLLKP. R149 lines the L-ascorbate pocket. Residues 155–175 form a helical membrane-spanning segment; sequence IHVFFGASILSLAIASVVSGI. Heme b-binding residues include H156 and E177. The Lumenal portion of the chain corresponds to 176-197; that stretch reads NEKLFFSLKNGTKTYSNLPSEA. N-linked (GlcNAc...) asparagine glycosylation occurs at N185. Residues 198-218 traverse the membrane as a helical segment; the sequence is VFANCAGMLVVVFGLLVLYIL. Residues 219–265 lie on the Cytoplasmic side of the membrane; sequence LASSWKRPEPGMQAEREPTRTRGRAGTPEVMLEGERGLAEPLLQKRS. K224 is a heme b binding site. A compositionally biased stretch (basic and acidic residues) spans 228-238; it reads PGMQAEREPTR. A disordered region spans residues 228-265; the sequence is PGMQAEREPTRTRGRAGTPEVMLEGERGLAEPLLQKRS.

As to quaternary structure, homodimer. Heme b serves as cofactor. In terms of processing, N-glycosylated.

It is found in the late endosome membrane. The protein localises to the lysosome membrane. The enzyme catalyses Fe(3+)(out) + L-ascorbate(in) = monodehydro-L-ascorbate radical(in) + Fe(2+)(out) + H(+). Transmembrane reductase that uses ascorbate as an electron donor in the cytoplasm and transfers electrons across membranes to reduce iron cations Fe(3+) into Fe(2+) in the lumen of the late endosome and lysosome. Reduced iron can then be extruded from the late endosome and lysosome to the cytoplasm by divalent metal-specific transporters. It is therefore most probably involved in endosomal and lysosomal cellular iron homeostasis. In Bos taurus (Bovine), this protein is Lysosomal membrane ascorbate-dependent ferrireductase CYB561A3.